The primary structure comprises 30 residues: Beta/omega-theraphotoxin-Tp2a (30 aa).

Intrachain disulfides connect C2/C16, C9/C21, and C15/C25. A flexible tail region important for ability to inhibit Nav channel region spans residues 26–30 (KKKLW). Positions 29 to 30 (LW) are hydrophobic dyad that anchors the toxin into the membrane while positioning it over the S3 helix of Nav1.7/SCN9A.

Belongs to the neurotoxin 30 (phrixotoxin) family. As to expression, expressed by the venom gland.

Its subcellular location is the secreted. Gating-modifier toxin that targets voltage-gated sodium channels with a selective activity on Nav1.7/SCN9A (IC(50)=1-1.5 nM). It inhibits both activation and inactivation. For inhibition of activation, it is 100-fold more selective for Nav1.7/SCN9A (IC(50)=0.26-3) than for other sodium channels (Nav1.2/SCN2A (IC(50)=40-540 nM), Nav1.3/SCN3A (IC(50)=102 nM), Nav1.4/SCN4A (IC(50)=30-39 nM), Nav1.5/SCN5A (IC(50)=19-90 nM), Nav1.6/SCN8A (IC(50)=26 nM), and Nav1.8/SCN10A (IC(50)=146 nM)). For inhibition of inactivation, it is 20-fold more potent in inhibiting inactivation on Nav1.7/SCN9A (IC(50)=250 nM) than other channels (about 4.6 uM for all channels). It also weakly inhibits Cav1.2/CACNA1C and Cav3.2/CACNA1H (29% block at 1 uM). It inhibits Nav1.7/SCN9A activation by interacting with DII and impairs Nav1.7/SCN9A inactivation by interacting with DIV. It docks on top of the DII S3 helix Nav1.7/SCN9A. It is about 60-fold less active on Nav1.7/SCN9A at depolarized potential (0 mV; IC(50)=15 nM), compared to -120 mV potential (IC(50)=0.26 nM). This toxin binds to lipid membrane. This ability correlates with hNav1.7/SCN9A inhibition, showing that membrane binding is the first step in the inhibitory mechanism of this toxin. It inhibits Nav1.2/SCN2A less potently when it is coexpressed with SCN2B or SCN4B than when it is expressed alone, showing that beta subunits (SCN2B and SCN4B) have a protective effect. The polypeptide is Beta/omega-theraphotoxin-Tp2a (Thrixopelma pruriens (Peruvian green velvet tarantula)).